A 271-amino-acid polypeptide reads, in one-letter code: Type II restriction enzyme ScrFI (271 aa).

It catalyses the reaction Endonucleolytic cleavage of DNA to give specific double-stranded fragments with terminal 5'-phosphates.. Its function is as follows. A P subtype restriction enzyme that recognizes the double-stranded sequence 5'-CCNGG-3' and cleaves after C-2. In Lactococcus lactis subsp. cremoris (Streptococcus cremoris), this protein is Type II restriction enzyme ScrFI.